The following is a 271-amino-acid chain: Meiotic drive suppressor wtf35 (271 aa).

Disordered stretches follow at residues 1-24 (MKNN…DHEI) and 54-75 (TVPE…ERRQ). A compositionally biased stretch (polar residues) spans 57-69 (EDSSTGPTETANP). 4 consecutive transmembrane segments (helical) span residues 90 to 110 (LLIS…CVNP), 120 to 140 (AFSV…FCFF), 176 to 196 (WENM…VGSP), and 213 to 233 (SLAE…AETV).

It belongs to the WTF family. In terms of assembly, homomer. Interacts with other proteins that exhibit high sequence similarity.

It is found in the spore membrane. Its subcellular location is the vacuole membrane. Functionally, acts as a suppressor component of the dual wtf meiotic drive system, and can suppress but not confer meiotic drive by compatible poisons. Wtf meiotic drive systems promote unequal transmission of alleles from the parental zygote to progeny spores by encoding a poison and an antidote from the same locus; the poison is trans-acting and forms toxic aggregates in all spores within an ascus, wherease the antidote is spore-specific and targets aggregates for degradation by the vacuole. Meiotic drive by wtf systems therefore lead to poisoning of all progeny that do not inherit the dual poison/antidote allele, or express a compatible antidote. In Schizosaccharomyces kambucha (Fission yeast), this protein is Meiotic drive suppressor wtf35.